The sequence spans 269 residues: Phosphatidylglycerophosphate phosphatase 1, chloroplastic (269 aa).

The N-terminal 33 residues, 1–33, are a transit peptide targeting the chloroplast; sequence MRSVPGPSPPCTRSLAHSCRAAARGPCGSARPR. Residues 25–46 form a disordered region; it reads GPCGSARPRARSVSARAHSSEA. Over residues 29–46 the composition is skewed to low complexity; that stretch reads SARPRARSVSARAHSSEA. Positions 103–107 match the Phosphoryl acceptor motif; that stretch reads DKDNT.

The protein belongs to the HAD-like hydrolase superfamily.

It is found in the plastid. It localises to the chloroplast. The catalysed reaction is a 1,2-diacyl-sn-glycero-3-phospho-(1'-sn-glycero-3'-phosphate) + H2O = a 1,2-diacyl-sn-glycero-3-phospho-(1'-sn-glycerol) + phosphate. Its pathway is phospholipid metabolism; phosphatidylglycerol biosynthesis; phosphatidylglycerol from CDP-diacylglycerol: step 2/2. Its function is as follows. Phosphatidylglycerophosphate phosphatase involved in the biosynthesis of phosphatidylglycerol (PG), a phosphoglycerolipid predominantly present in chloroplastic thylakoid membranes and which has important photosynthetic function. Required for thylakoid membranes development and chloroplast function. The sequence is that of Phosphatidylglycerophosphate phosphatase 1, chloroplastic from Chlamydomonas reinhardtii (Chlamydomonas smithii).